Reading from the N-terminus, the 555-residue chain is Dihydroxy-acid dehydratase (555 aa).

Residue D78 coordinates Mg(2+). A [2Fe-2S] cluster-binding site is contributed by C119. Residues D120 and K121 each contribute to the Mg(2+) site. N6-carboxylysine is present on K121. C191 lines the [2Fe-2S] cluster pocket. E444 contributes to the Mg(2+) binding site. S470 acts as the Proton acceptor in catalysis.

It belongs to the IlvD/Edd family. In terms of assembly, homodimer. [2Fe-2S] cluster is required as a cofactor. Mg(2+) serves as cofactor.

The catalysed reaction is (2R)-2,3-dihydroxy-3-methylbutanoate = 3-methyl-2-oxobutanoate + H2O. It carries out the reaction (2R,3R)-2,3-dihydroxy-3-methylpentanoate = (S)-3-methyl-2-oxopentanoate + H2O. The protein operates within amino-acid biosynthesis; L-isoleucine biosynthesis; L-isoleucine from 2-oxobutanoate: step 3/4. It functions in the pathway amino-acid biosynthesis; L-valine biosynthesis; L-valine from pyruvate: step 3/4. Functionally, functions in the biosynthesis of branched-chain amino acids. Catalyzes the dehydration of (2R,3R)-2,3-dihydroxy-3-methylpentanoate (2,3-dihydroxy-3-methylvalerate) into 2-oxo-3-methylpentanoate (2-oxo-3-methylvalerate) and of (2R)-2,3-dihydroxy-3-methylbutanoate (2,3-dihydroxyisovalerate) into 2-oxo-3-methylbutanoate (2-oxoisovalerate), the penultimate precursor to L-isoleucine and L-valine, respectively. This is Dihydroxy-acid dehydratase from Nitratidesulfovibrio vulgaris (strain DSM 19637 / Miyazaki F) (Desulfovibrio vulgaris).